We begin with the raw amino-acid sequence, 251 residues long: Ubiquinone/menaquinone biosynthesis C-methyltransferase UbiE (251 aa).

S-adenosyl-L-methionine is bound by residues Thr-74, Asp-95, and 123-124 (NA).

It belongs to the class I-like SAM-binding methyltransferase superfamily. MenG/UbiE family.

It carries out the reaction a 2-demethylmenaquinol + S-adenosyl-L-methionine = a menaquinol + S-adenosyl-L-homocysteine + H(+). The enzyme catalyses a 2-methoxy-6-(all-trans-polyprenyl)benzene-1,4-diol + S-adenosyl-L-methionine = a 5-methoxy-2-methyl-3-(all-trans-polyprenyl)benzene-1,4-diol + S-adenosyl-L-homocysteine + H(+). It participates in quinol/quinone metabolism; menaquinone biosynthesis; menaquinol from 1,4-dihydroxy-2-naphthoate: step 2/2. It functions in the pathway cofactor biosynthesis; ubiquinone biosynthesis. Its function is as follows. Methyltransferase required for the conversion of demethylmenaquinol (DMKH2) to menaquinol (MKH2) and the conversion of 2-polyprenyl-6-methoxy-1,4-benzoquinol (DDMQH2) to 2-polyprenyl-3-methyl-6-methoxy-1,4-benzoquinol (DMQH2). The chain is Ubiquinone/menaquinone biosynthesis C-methyltransferase UbiE from Shewanella sp. (strain ANA-3).